We begin with the raw amino-acid sequence, 551 residues long: Structure-specific endonuclease subunit MUS81 (551 aa).

2 disordered regions span residues 85–131 and 231–255; these read LASG…AGYW and PEEH…EVGV. Serine 95 carries the phosphoserine modification. The segment covering 110–131 has biased composition (polar residues); it reads VQGSSMPVPTQPQAGSTNAGYW. Residues 124-243 are interaction with BLM; that stretch reads GSTNAGYWPA…HHEESPVPEA (120 aa). The tract at residues 131–230 is winged helix domain (WHD); critical for endonuclease activity; sequence WPAQNSGARE…GLSTLNTAFQ (100 aa). The ERCC4 domain occupies 270 to 372; that stretch reads LLCVDIGETR…HRIYLVEEHG (103 aa). Catalysis depends on residues aspartate 274, glutamate 277, and aspartate 307. Mg(2+) is bound by residues aspartate 274, glutamate 277, aspartate 307, glutamate 333, and arginine 334. The tract at residues 471-545 is helix-hairpin-helix (2HhH); involved in DNA recognition and bending; it reads VREVFARQLM…LSRTLYQLYC (75 aa).

Belongs to the XPF family. Part of the heterodimeric DNA structure-specific endonuclease complex MUS81-EME1. Part of the heterodimeric DNA structure-specific endonuclease complex MUS81-EME2. Interacts with BLM; may stimulate the endonuclease activity of MUS81. Interacts with SLX4/BTBD12; this interaction is direct and links the MUS81-EME1 complex to SLX4, which may coordinate the action of the structure-specific endonuclease during DNA repair. Interacts with DCLRE1B/Apollo. Interacts with RECQL5; this interaction stimulates mitotic DNA synthesis. Interacts with CHEK2. Requires Mg(2+) as cofactor.

Its subcellular location is the nucleus. It is found in the nucleolus. Its function is as follows. Catalytic subunit of two functionally distinct, structure-specific, heterodimeric DNA endonucleases MUS81-EME1 and MUS81-EME2 that are involved in the maintenance of genome stability. Both endonucleases have essentially the same substrate specificity though MUS81-EME2 is more active than its MUS81-EME1 counterpart. Both cleave 3'-flaps and nicked Holliday junctions, and exhibit limited endonuclease activity with 5' flaps and nicked double-stranded DNAs. MUS81-EME2 which is active during the replication of DNA is more specifically involved in replication fork processing. Replication forks frequently encounter obstacles to their passage, including DNA base lesions, DNA interstrand cross-links, difficult-to-replicate sequences, transcription bubbles, or tightly bound proteins. One mechanism for the restart of a stalled replication fork involves nucleolytic cleavage mediated by the MUS81-EME2 endonuclease. By acting upon the stalled fork, MUS81-EME2 generates a DNA double-strand break (DSB) that can be repaired by homologous recombination, leading to the restoration of an active fork. MUS81-EME2 could also function in telomere maintenance. MUS81-EME1, on the other hand, is active later in the cell cycle and functions in the resolution of mitotic recombination intermediates including the Holliday junctions, the four-way DNA intermediates that form during homologous recombination. This is Structure-specific endonuclease subunit MUS81 from Rattus norvegicus (Rat).